The chain runs to 556 residues: Dihydroxy-acid dehydratase (556 aa).

Cys47 contributes to the [2Fe-2S] cluster binding site. Asp79 contributes to the Mg(2+) binding site. Cys120 is a binding site for [2Fe-2S] cluster. 2 residues coordinate Mg(2+): Asp121 and Lys122. Residue Lys122 is modified to N6-carboxylysine. Cys192 serves as a coordination point for [2Fe-2S] cluster. Glu444 contacts Mg(2+). Ser470 acts as the Proton acceptor in catalysis.

It belongs to the IlvD/Edd family. Homodimer. It depends on [2Fe-2S] cluster as a cofactor. The cofactor is Mg(2+).

It catalyses the reaction (2R)-2,3-dihydroxy-3-methylbutanoate = 3-methyl-2-oxobutanoate + H2O. It carries out the reaction (2R,3R)-2,3-dihydroxy-3-methylpentanoate = (S)-3-methyl-2-oxopentanoate + H2O. It functions in the pathway amino-acid biosynthesis; L-isoleucine biosynthesis; L-isoleucine from 2-oxobutanoate: step 3/4. It participates in amino-acid biosynthesis; L-valine biosynthesis; L-valine from pyruvate: step 3/4. Functionally, functions in the biosynthesis of branched-chain amino acids. Catalyzes the dehydration of (2R,3R)-2,3-dihydroxy-3-methylpentanoate (2,3-dihydroxy-3-methylvalerate) into 2-oxo-3-methylpentanoate (2-oxo-3-methylvalerate) and of (2R)-2,3-dihydroxy-3-methylbutanoate (2,3-dihydroxyisovalerate) into 2-oxo-3-methylbutanoate (2-oxoisovalerate), the penultimate precursor to L-isoleucine and L-valine, respectively. This is Dihydroxy-acid dehydratase from Prochlorococcus marinus (strain MIT 9303).